Here is a 307-residue protein sequence, read N- to C-terminus: HPr kinase/phosphorylase (307 aa).

Catalysis depends on residues H136 and K157. 151-158 (GESGIGKS) is a binding site for ATP. S158 is a binding site for Mg(2+). D175 acts as the Proton acceptor; for phosphorylation activity. Proton donor; for dephosphorylation activity in catalysis. An important for the catalytic mechanism of both phosphorylation and dephosphorylation region spans residues 198–207 (LEVRGMGIID). E199 lines the Mg(2+) pocket. R240 is a catalytic residue. An important for the catalytic mechanism of dephosphorylation region spans residues 261–266 (PIRPGR).

This sequence belongs to the HPrK/P family. In terms of assembly, homohexamer. It depends on Mg(2+) as a cofactor.

The catalysed reaction is [HPr protein]-L-serine + ATP = [HPr protein]-O-phospho-L-serine + ADP + H(+). It carries out the reaction [HPr protein]-O-phospho-L-serine + phosphate + H(+) = [HPr protein]-L-serine + diphosphate. Functionally, catalyzes the ATP- as well as the pyrophosphate-dependent phosphorylation of a specific serine residue in HPr, a phosphocarrier protein of the phosphoenolpyruvate-dependent sugar phosphotransferase system (PTS). HprK/P also catalyzes the pyrophosphate-producing, inorganic phosphate-dependent dephosphorylation (phosphorolysis) of seryl-phosphorylated HPr (P-Ser-HPr). The two antagonistic activities of HprK/P are regulated by several intracellular metabolites, which change their concentration in response to the absence or presence of rapidly metabolisable carbon sources (glucose, fructose, etc.) in the growth medium. Therefore, by controlling the phosphorylation state of HPr, HPrK/P is a sensor enzyme that plays a major role in the regulation of carbon metabolism and sugar transport: it mediates carbon catabolite repression (CCR), and regulates PTS-catalyzed carbohydrate uptake and inducer exclusion. This chain is HPr kinase/phosphorylase, found in Clostridium perfringens (strain 13 / Type A).